The following is a 190-amino-acid chain: DNA-invertase hin (190 aa).

A Resolvase/invertase-type recombinase catalytic domain is found at 2 to 135 (ATIGYIRVST…AGLAAARAQG (134 aa)). The O-(5'-phospho-DNA)-serine intermediate role is filled by S10. The H-T-H motif DNA-binding region spans 162-181 (RQQLAIIFGIGVSTLYRYFP).

This sequence belongs to the site-specific recombinase resolvase family.

In terms of biological role, a DNA fragment of approximately 900 base pairs, adjacent to the fljB (H2) gene, which specifies the synthesis of phase-2 flagellin, can exist in either orientation with respect to fljB. The orientation of the inversion region controls expression of fljB. The hin gene occupies about two-thirds of the inversion region; it is required for the inversion of the fljB controlling region. The chain is DNA-invertase hin (hin) from Salmonella typhimurium (strain LT2 / SGSC1412 / ATCC 700720).